Reading from the N-terminus, the 313-residue chain is Ribose 1,5-bisphosphate isomerase (313 aa).

Residues 17–20 and R57 each bind substrate; that span reads RGAA. C121 serves as the catalytic Proton acceptor. D190 acts as the Proton donor in catalysis. Residues 200 to 201 and K226 each bind substrate; that span reads NK.

Belongs to the eIF-2B alpha/beta/delta subunits family. R15P isomerase subfamily.

The catalysed reaction is alpha-D-ribose 1,5-bisphosphate = D-ribulose 1,5-bisphosphate. Catalyzes the isomerization of ribose 1,5-bisphosphate (R15P) to ribulose 1,5-bisphosphate (RuBP), the CO(2) acceptor and substrate for RubisCO. Functions in an archaeal AMP degradation pathway, together with AMP phosphorylase and RubisCO. The protein is Ribose 1,5-bisphosphate isomerase of Archaeoglobus fulgidus (strain ATCC 49558 / DSM 4304 / JCM 9628 / NBRC 100126 / VC-16).